A 92-amino-acid chain; its full sequence is UPF0728 protein (92 aa).

The protein belongs to the UPF0728 family.

The chain is UPF0728 protein from Branchiostoma floridae (Florida lancelet).